Reading from the N-terminus, the 452-residue chain is MPPPTTPTPNPSIPQKATLTPLPPFQPDLYQRAWSSIPHPTLPLLATGHAKSVTVFSLATLSKHSALTGGHARSVRTVAWQPARGGGTGGGSGGKRLGLVTGSFDATAGLWSFEGDADAAAGGGGGGLEREVRMGGGGGGGGESEEEEEVREWEFNLVLEGHENEVKSLAFSPGGQYLATSSRDKSVWIWEDVSSGQGGDDEDEWETVAVLSEHDGDVKAVAWCPSNLPNARAGVGRQHNSSEVLASASYDDTVRVWREDADGEWVCVAVLEGHGGTVWGLQWEGKERQDGRFPRLMTFSAGRVRSRVWTLRVSGFGGVPSTMRRSLREEWDCTAVLPKVHTRDVYSVSWSADTGLVASTGSDGIIAVYAEESAPEDVAKSGVEGGAENGTSGPKSNWKVLGTITRAHGPYEVNHITWCKRFDPGAEHKGKEEMLVTTGDDGVVRPWQVRIS.

Residues 1–12 are compositionally biased toward pro residues; that stretch reads MPPPTTPTPNPS. Residues 1–24 are disordered; the sequence is MPPPTTPTPNPSIPQKATLTPLPP. WD repeat units lie at residues 70-121, 161-200, 213-267, 273-319, 340-379, and 411-452; these read GHAR…DAAA, GHEN…QGGD, EHDG…EWVC, GHGG…FGGV, VHTR…EDVA, and YEVN…VRIS.

The protein belongs to the WD repeat CIA1 family.

In terms of biological role, essential component of the cytosolic iron-sulfur (Fe/S) protein assembly machinery. Required for the maturation of extramitochondrial Fe/S proteins. In Chaetomium globosum (strain ATCC 6205 / CBS 148.51 / DSM 1962 / NBRC 6347 / NRRL 1970) (Soil fungus), this protein is Probable cytosolic iron-sulfur protein assembly protein 1.